The primary structure comprises 256 residues: UPF0246 protein HRM2_41860 (256 aa).

This sequence belongs to the UPF0246 family.

The chain is UPF0246 protein HRM2_41860 from Desulforapulum autotrophicum (strain ATCC 43914 / DSM 3382 / VKM B-1955 / HRM2) (Desulfobacterium autotrophicum).